Here is a 708-residue protein sequence, read N- to C-terminus: Probable GTP diphosphokinase RSH3, chloroplastic (708 aa).

Disordered regions lie at residues 1 to 50 and 109 to 134; these read MSLP…AAGG and HSPV…SWLA. The transit peptide at 1–58 directs the protein to the chloroplast; the sequence is MSLPAISLYTSPPPGAVYSSEFDPSSRGSSPPCSTAPPSTSHRPPAAAGGLSCLFSSP. Low complexity-rich tracts occupy residues 29-41 and 118-131; these read SSPP…PSTS and PSSS…PPAS. Positions 233-337 constitute an HD domain; sequence YLQHCVETAV…IKLADRVHNM (105 aa).

The protein belongs to the RelA/SpoT family.

It is found in the plastid. Its subcellular location is the chloroplast. The enzyme catalyses GTP + ATP = guanosine 3'-diphosphate 5'-triphosphate + AMP. In terms of biological role, probable ppGpp (guanosine 3'-diphosphate 5'-diphosphate) synthetase that may be involved in a rapid plant ppGpp-mediated response to pathogens and other stresses. In Oryza sativa subsp. japonica (Rice), this protein is Probable GTP diphosphokinase RSH3, chloroplastic (RSH3).